Reading from the N-terminus, the 448-residue chain is Phosphohexose mutases (448 aa).

S97 (phosphoserine intermediate) is an active-site residue. Residues S97, D237, D239, and D241 each contribute to the Mg(2+) site.

It belongs to the phosphohexose mutase family. The cofactor is Mg(2+).

It catalyses the reaction alpha-D-glucose 1-phosphate = alpha-D-glucose 6-phosphate. The enzyme catalyses alpha-D-mannose 1-phosphate = D-mannose 6-phosphate. The protein operates within nucleotide-sugar biosynthesis; GDP-alpha-D-mannose biosynthesis; alpha-D-mannose 1-phosphate from D-fructose 6-phosphate: step 2/2. Functionally, involved in xanthan production. In Xanthomonas campestris pv. campestris (strain ATCC 33913 / DSM 3586 / NCPPB 528 / LMG 568 / P 25), this protein is Phosphohexose mutases (xanA).